Reading from the N-terminus, the 443-residue chain is 26S proteasome regulatory subunit 4 homolog A (443 aa).

Disordered regions lie at residues 1 to 55 and 87 to 108; these read MGQG…LPTV and RLKP…LRGT. Composition is skewed to basic and acidic residues over residues 12-28 and 87-106; these read QGDR…KKFE and RLKP…DDLR. ATP is bound at residue 229–236; it reads GEPGTGKT. Glycyl lysine isopeptide (Lys-Gly) (interchain with G-Cter in ubiquitin) cross-links involve residues Lys-296 and Lys-433.

This sequence belongs to the AAA ATPase family. Component of the 19S regulatory particle (RP/PA700) base subcomplex of the 26S proteasome. The 26S proteasome is composed of a core protease (CP), known as the 20S proteasome, capped at one or both ends by the 19S regulatory particle (RP/PA700). The RP/PA700 complex is composed of at least 17 different subunits in two subcomplexes, the base and the lid, which form the portions proximal and distal to the 20S proteolytic core, respectively. Required for innate immunity. Interacts with UNI. Preferentially expressed in the root and shoot apical meristem.

It localises to the cytoplasm. Its subcellular location is the P-body. The protein localises to the nucleus. Functionally, the 26S protease is involved in the ATP-dependent degradation of ubiquitinated proteins. The regulatory (or ATPase) complex confers ATP dependency and substrate specificity to the 26S complex. Interacts with transit peptides of proteins targeted to the chloroplast, and may be involved in the degradation of unimported plastid protein precursors. Is required for the maintenance of postembryonic root and shoot meristems. Has a specific role in the regulation of organs size. Acts redundantly with RPT2B in the regulation of gametogenesis. With RPT2B plays a critical role in 26S proteasome assembly. Acts as an upstream signaling component for inducing both defense and morphological phenotypes in the constitutive active uni-1D mutant. Acts as a negative regulator of endoreduplication in trichome cells. May function after the completion of the third endoreduplication step (8C to 16C) mediated by RHL1. Acts as a negative regulator of transcriptional gene silencing (TGS) at specific endogenous genes through DNA methylation. Promotes post-transcriptional gene silencing (PTGS) by limiting the degradation of transgene aberrant RNAs by the RNA quality control (RQC) machinery, thus favoring their entry into cytoplasmic siRNA bodies where they can trigger PTGS. Involved in tolerance to zinc deficiency, possibly through alleviation of oxidative stresses or processing of poly-ubiquitinated proteins. Required for resistance to the fungal pathogen Golovinomyces cichoracearum. The protein is 26S proteasome regulatory subunit 4 homolog A of Arabidopsis thaliana (Mouse-ear cress).